The primary structure comprises 535 residues: GMP synthase [glutamine-hydrolyzing] (535 aa).

One can recognise a Glutamine amidotransferase type-1 domain in the interval 24 to 217 (KILIVDFGSQ…VRNISGLGGD (194 aa)). Cysteine 101 serves as the catalytic Nucleophile. Active-site residues include histidine 191 and glutamate 193. Positions 218 to 410 (WTMHAFREEE…LGLPDVFVGR (193 aa)) constitute a GMPS ATP-PPase domain. 245–251 (SGGVDSA) contacts ATP.

In terms of assembly, homodimer.

The enzyme catalyses XMP + L-glutamine + ATP + H2O = GMP + L-glutamate + AMP + diphosphate + 2 H(+). The protein operates within purine metabolism; GMP biosynthesis; GMP from XMP (L-Gln route): step 1/1. Functionally, catalyzes the synthesis of GMP from XMP. The polypeptide is GMP synthase [glutamine-hydrolyzing] (Bradyrhizobium sp. (strain ORS 278)).